The following is a 101-amino-acid chain: uncharacterized protein (101 aa).

A helical transmembrane segment spans residues 77–99; that stretch reads VFSFMNGFTDGCICGTIIILCLI.

It localises to the membrane. This is an uncharacterized protein from Acanthamoeba polyphaga mimivirus (APMV).